Here is a 362-residue protein sequence, read N- to C-terminus: Mortality factor 4-like protein 1 (362 aa).

The region spanning 12–51 is the Tudor-knot domain; the sequence is QEGERVLCFHGPLLYEAKCVKVAIKDKQVKYFIHYSGWNK. The segment at 26-62 is interaction with KAT8; that stretch reads YEAKCVKVAIKDKQVKYFIHYSGWNKKSAVRPRRSEK. A disordered region spans residues 113-182; that stretch reads RELQKANQEQ…RKKRARVDPT (70 aa). The tract at residues 133–266 is sufficient for interaction with SIN3A; sequence PGKKTSGLQQ…VAGIKEYFNV (134 aa). Residues 135 to 146 carry the Nuclear localization signal motif; it reads KKTSGLQQKNVE. K143 is subject to N6-acetyllysine. Positions 164–230 are interaction with RB1-1; it reads STSETPQPPR…FYLPAKKNVD (67 aa). The tract at residues 188–342 is sufficient for interaction with PHF12; it reads TFMNRVEVKV…FLKYLAKNSA (155 aa). Residues 191 to 362 form the MRG domain; sequence NRVEVKVKIP…APPEYHRKAV (172 aa). Residues 323-344 form an interaction with RB1-2 region; that stretch reads LALLLNYLHDFLKYLAKNSATL.

As to quaternary structure, component of the NuA4 histone acetyltransferase complex which contains the catalytic subunit KAT5/TIP60 and the subunits EP400, TRRAP/PAF400, BRD8/SMAP, EPC1, DMAP1/DNMAP1, RUVBL1/TIP49, RUVBL2, ING3, actin, ACTL6A/BAF53A, MORF4L1/MRG15, MORF4L2/MRGX, MRGBP, YEATS4/GAS41, VPS72/YL1 and MEAF6. The NuA4 complex interacts with MYC and the adenovirus E1A protein. MORF4L1 may also participate in the formation of NuA4 related complexes which lack the KAT5/TIP60 catalytic subunit, but which include the SWI/SNF related protein SRCAP. Component of the mSin3A histone deacetylase complex, which includes SIN3A, HDAC2, ARID4B, MORF4L1, RBBP4/RbAp48, and RBBP7/RbAp46. May also interact with PHF12 and one or more as yet undefined members of the TLE (transducin-like enhancer of split) family of transcriptional repressors. Component of the SIN3B complex, which includes SIN3B, HDAC2 or HDAC1, PHF12 and MORF4L1. Interacts with RB1 and KAT8. Interacts with the N-terminus of MRFAP1. Found in a complex composed of MORF4L1, MRFAP1 and RB1. Interacts with the entire BRCA complex, which contains BRCA1, PALB2, BRCA2 and RAD51. Interacts with PALB2. Forms a complex with MSL1 and NUPR1.

The protein localises to the nucleus. In terms of biological role, component of the NuA4 histone acetyltransferase (HAT) complex which is involved in transcriptional activation of select genes principally by acetylation of nucleosomal histones H4 and H2A. This modification may both alter nucleosome - DNA interactions and promote interaction of the modified histones with other proteins which positively regulate transcription. This complex may be required for the activation of transcriptional programs associated with oncogene and proto-oncogene mediated growth induction, tumor suppressor mediated growth arrest and replicative senescence, apoptosis, and DNA repair. The NuA4 complex ATPase and helicase activities seem to be, at least in part, contributed by the association of RUVBL1 and RUVBL2 with EP400. NuA4 may also play a direct role in DNA repair when directly recruited to sites of DNA damage. As part of the SIN3B complex represses transcription and counteracts the histone acetyltransferase activity of EP300 through the recognition H3K27ac marks by PHF12 and the activity of the histone deacetylase HDAC2. SIN3B complex is recruited downstream of the constitutively active genes transcriptional start sites through interaction with histones and mitigates histone acetylation and RNA polymerase II progression within transcribed regions contributing to the regulation of transcription. Required for homologous recombination repair (HRR) and resistance to mitomycin C (MMC). Involved in the localization of PALB2, BRCA2 and RAD51, but not BRCA1, to DNA-damage foci. The sequence is that of Mortality factor 4-like protein 1 (Morf4l1) from Mus musculus (Mouse).